Reading from the N-terminus, the 276-residue chain is Tryptase beta-2 (276 aa).

An N-terminal signal peptide occupies residues 1–21; it reads MLKRRLLLLWALSLLASLVYS. Residues 22-31 constitute a propeptide, activation peptide; the sequence is APRPANQRVG. A Peptidase S1 domain is found at 32–273; that stretch reads IVGGHEASES…YLDWIHRYVP (242 aa). An intrachain disulfide couples C60 to C76. H75 functions as the Charge relay system in the catalytic mechanism. Phosphotyrosine is present on Y98. D122 (charge relay system) is an active-site residue. An N-linked (GlcNAc...) asparagine glycan is attached at N133. Intrachain disulfides connect C156–C231, C189–C212, and C221–C249. S225 acts as the Charge relay system in catalysis.

Belongs to the peptidase S1 family. Tryptase subfamily. In terms of assembly, homotetramer. The active tetramer is converted to inactive monomers at neutral and acidic pH in the absence of heparin. Low concentrations of inactive monomers become active monomers at pH 6.0 in the presence of heparin. When the concentration of active monomers is higher, they convert to active monomers and then to active tetramers. These monomers are active and functionally distinct from the tetrameric enzyme. In contrast to the hidden active sites in the tetrameric form, the active site of the monomeric form is accessible for macromolecular proteins and inhibitors, e.g. fibrinogen which is a substrate for the monomeric but not for the tetrameric form. The monomeric form forms a complex with SERPINB6. As to expression, during embryogenesis, detected primarily in skin.

The protein resides in the secreted. The enzyme catalyses Preferential cleavage: Arg-|-Xaa, Lys-|-Xaa, but with more restricted specificity than trypsin.. Its function is as follows. Tryptase is the major neutral protease present in mast cells and is secreted upon the coupled activation-degranulation response of this cell type. Plays a role in innate immunity. The sequence is that of Tryptase beta-2 (Tpsb2) from Mus musculus (Mouse).